The following is a 279-amino-acid chain: Thymidylate synthase (279 aa).

133–134 (RR) is a dUMP binding site. The active-site Nucleophile is the cysteine 154. Residues 178–181 (RSND), asparagine 189, and 219–221 (HIY) each bind dUMP. Residue aspartate 181 coordinates (6R)-5,10-methylene-5,6,7,8-tetrahydrofolate. A (6R)-5,10-methylene-5,6,7,8-tetrahydrofolate-binding site is contributed by alanine 278.

The protein belongs to the thymidylate synthase family. Bacterial-type ThyA subfamily. As to quaternary structure, homodimer.

The protein resides in the cytoplasm. It carries out the reaction dUMP + (6R)-5,10-methylene-5,6,7,8-tetrahydrofolate = 7,8-dihydrofolate + dTMP. Its pathway is pyrimidine metabolism; dTTP biosynthesis. Its function is as follows. Catalyzes the reductive methylation of 2'-deoxyuridine-5'-monophosphate (dUMP) to 2'-deoxythymidine-5'-monophosphate (dTMP) while utilizing 5,10-methylenetetrahydrofolate (mTHF) as the methyl donor and reductant in the reaction, yielding dihydrofolate (DHF) as a by-product. This enzymatic reaction provides an intracellular de novo source of dTMP, an essential precursor for DNA biosynthesis. The sequence is that of Thymidylate synthase from Streptococcus gordonii (strain Challis / ATCC 35105 / BCRC 15272 / CH1 / DL1 / V288).